We begin with the raw amino-acid sequence, 145 residues long: Lipoprotein signal peptidase (145 aa).

The next 2 membrane-spanning stretches (helical) occupy residues 57 to 77 (LFFI…MIKL) and 79 to 99 (ENSL…GNLI). Active-site residues include Asp109 and Asp124. A helical transmembrane segment spans residues 120 to 140 (FNVADSFIVVGAIILGYLMIF).

This sequence belongs to the peptidase A8 family.

It localises to the cell membrane. The catalysed reaction is Release of signal peptides from bacterial membrane prolipoproteins. Hydrolyzes -Xaa-Yaa-Zaa-|-(S,diacylglyceryl)Cys-, in which Xaa is hydrophobic (preferably Leu), and Yaa (Ala or Ser) and Zaa (Gly or Ala) have small, neutral side chains.. The protein operates within protein modification; lipoprotein biosynthesis (signal peptide cleavage). Its function is as follows. This protein specifically catalyzes the removal of signal peptides from prolipoproteins. This is Lipoprotein signal peptidase from Caldanaerobacter subterraneus subsp. tengcongensis (strain DSM 15242 / JCM 11007 / NBRC 100824 / MB4) (Thermoanaerobacter tengcongensis).